Consider the following 429-residue polypeptide: Trigger factor (429 aa).

The region spanning 164–249 (GDWAVIDHEG…LKALKVRQAP (86 aa)) is the PPIase FKBP-type domain.

Belongs to the FKBP-type PPIase family. Tig subfamily.

The protein localises to the cytoplasm. The enzyme catalyses [protein]-peptidylproline (omega=180) = [protein]-peptidylproline (omega=0). Involved in protein export. Acts as a chaperone by maintaining the newly synthesized protein in an open conformation. Functions as a peptidyl-prolyl cis-trans isomerase. In Anaeromyxobacter dehalogenans (strain 2CP-C), this protein is Trigger factor.